The primary structure comprises 806 residues: Leucine--tRNA ligase (806 aa).

The short motif at 40-51 (PYPSGTGLHVGH) is the 'HIGH' region element. Positions 576–580 (KMSKS) match the 'KMSKS' region motif. An ATP-binding site is contributed by K579.

This sequence belongs to the class-I aminoacyl-tRNA synthetase family.

It localises to the cytoplasm. It carries out the reaction tRNA(Leu) + L-leucine + ATP = L-leucyl-tRNA(Leu) + AMP + diphosphate. The chain is Leucine--tRNA ligase from Prosthecochloris aestuarii (strain DSM 271 / SK 413).